The primary structure comprises 131 residues: Protein ApaG (131 aa).

The ApaG domain maps to 3-127 (RAVTRQIEVT…FSLDSPDGGK (125 aa)).

This Bradyrhizobium sp. (strain BTAi1 / ATCC BAA-1182) protein is Protein ApaG.